The sequence spans 322 residues: tRNA dimethylallyltransferase (322 aa).

Residue 18-25 (GPTASGKS) coordinates ATP. Residue 20–25 (TASGKS) coordinates substrate. Interaction with substrate tRNA stretches follow at residues 43–46 (DSRQ) and 167–171 (QRLVR).

It belongs to the IPP transferase family. As to quaternary structure, monomer. The cofactor is Mg(2+).

It catalyses the reaction adenosine(37) in tRNA + dimethylallyl diphosphate = N(6)-dimethylallyladenosine(37) in tRNA + diphosphate. Its function is as follows. Catalyzes the transfer of a dimethylallyl group onto the adenine at position 37 in tRNAs that read codons beginning with uridine, leading to the formation of N6-(dimethylallyl)adenosine (i(6)A). This chain is tRNA dimethylallyltransferase, found in Chlorobium phaeobacteroides (strain BS1).